Reading from the N-terminus, the 143-residue chain is Large ribosomal subunit protein uL11 (143 aa).

This sequence belongs to the universal ribosomal protein uL11 family. Part of the ribosomal stalk of the 50S ribosomal subunit. Interacts with L10 and the large rRNA to form the base of the stalk. L10 forms an elongated spine to which L12 dimers bind in a sequential fashion forming a multimeric L10(L12)X complex. Post-translationally, one or more lysine residues are methylated.

Forms part of the ribosomal stalk which helps the ribosome interact with GTP-bound translation factors. This chain is Large ribosomal subunit protein uL11, found in Cellvibrio japonicus (strain Ueda107) (Pseudomonas fluorescens subsp. cellulosa).